Consider the following 371-residue polypeptide: UDP-N-acetylglucosamine--N-acetylmuramyl-(pentapeptide) pyrophosphoryl-undecaprenol N-acetylglucosamine transferase (371 aa).

UDP-N-acetyl-alpha-D-glucosamine contacts are provided by residues 15 to 17 (TGG), Asn126, Arg169, Ser197, and Gln298.

The protein belongs to the glycosyltransferase 28 family. MurG subfamily.

It localises to the cell inner membrane. The enzyme catalyses di-trans,octa-cis-undecaprenyl diphospho-N-acetyl-alpha-D-muramoyl-L-alanyl-D-glutamyl-meso-2,6-diaminopimeloyl-D-alanyl-D-alanine + UDP-N-acetyl-alpha-D-glucosamine = di-trans,octa-cis-undecaprenyl diphospho-[N-acetyl-alpha-D-glucosaminyl-(1-&gt;4)]-N-acetyl-alpha-D-muramoyl-L-alanyl-D-glutamyl-meso-2,6-diaminopimeloyl-D-alanyl-D-alanine + UDP + H(+). The protein operates within cell wall biogenesis; peptidoglycan biosynthesis. Cell wall formation. Catalyzes the transfer of a GlcNAc subunit on undecaprenyl-pyrophosphoryl-MurNAc-pentapeptide (lipid intermediate I) to form undecaprenyl-pyrophosphoryl-MurNAc-(pentapeptide)GlcNAc (lipid intermediate II). This chain is UDP-N-acetylglucosamine--N-acetylmuramyl-(pentapeptide) pyrophosphoryl-undecaprenol N-acetylglucosamine transferase, found in Paramagnetospirillum magneticum (strain ATCC 700264 / AMB-1) (Magnetospirillum magneticum).